The chain runs to 319 residues: Methionyl-tRNA formyltransferase (319 aa).

110–113 (SLLP) provides a ligand contact to (6S)-5,6,7,8-tetrahydrofolate.

This sequence belongs to the Fmt family.

It carries out the reaction L-methionyl-tRNA(fMet) + (6R)-10-formyltetrahydrofolate = N-formyl-L-methionyl-tRNA(fMet) + (6S)-5,6,7,8-tetrahydrofolate + H(+). Functionally, attaches a formyl group to the free amino group of methionyl-tRNA(fMet). The formyl group appears to play a dual role in the initiator identity of N-formylmethionyl-tRNA by promoting its recognition by IF2 and preventing the misappropriation of this tRNA by the elongation apparatus. The chain is Methionyl-tRNA formyltransferase from Geobacillus thermodenitrificans (strain NG80-2).